Here is a 386-residue protein sequence, read N- to C-terminus: S-adenosylmethionine synthase (386 aa).

Histidine 16 is a binding site for ATP. A Mg(2+)-binding site is contributed by aspartate 18. Residue glutamate 44 coordinates K(+). L-methionine-binding residues include glutamate 57 and glutamine 100. The interval 100 to 110 is flexible loop; the sequence is QSRDITQGVDR. Residues 165-167, aspartate 240, 246-247, alanine 263, and lysine 267 each bind ATP; these read DAK and RK. Residue aspartate 240 coordinates L-methionine. Lysine 271 contacts L-methionine.

It belongs to the AdoMet synthase family. As to quaternary structure, homotetramer; dimer of dimers. Mg(2+) is required as a cofactor. Requires K(+) as cofactor.

Its subcellular location is the cytoplasm. It catalyses the reaction L-methionine + ATP + H2O = S-adenosyl-L-methionine + phosphate + diphosphate. Its pathway is amino-acid biosynthesis; S-adenosyl-L-methionine biosynthesis; S-adenosyl-L-methionine from L-methionine: step 1/1. Catalyzes the formation of S-adenosylmethionine (AdoMet) from methionine and ATP. The overall synthetic reaction is composed of two sequential steps, AdoMet formation and the subsequent tripolyphosphate hydrolysis which occurs prior to release of AdoMet from the enzyme. This is S-adenosylmethionine synthase from Francisella tularensis subsp. tularensis (strain FSC 198).